A 291-amino-acid polypeptide reads, in one-letter code: MAGLASGATTACRATPMSAATTGLPLRVRGIAKRYGDSDVLRGIDLEIAPSACVAIVGRSGCGKSTLLRVIAGLETADVGTVDSGRAPLAAQRDAVRLMFQDARLLPWKRVIDNVALGLGRAGRAQAQQALDAVGLGTRGNAWPSALSGGQRQRVALARALVHRPRLLLLDEPLGALDALTRIEMQQLIVQLWRQHGFTLVLVTHDVAEASALADRIVVLEHGKVGLDVAVPVPHPRAPGLPALASIQAQVLSRLLGTTQVPEPAAPKAQTRHGPPRGATAQDTSPLQRIL.

Residues Leu-26 to Ile-247 enclose the ABC transporter domain. Position 58 to 65 (Gly-58 to Ser-65) interacts with ATP. Residues Pro-264 to Leu-291 are disordered. Polar residues predominate over residues Ala-281–Leu-291.

This sequence belongs to the ABC transporter superfamily. Aliphatic sulfonates importer (TC 3.A.1.17.2) family. As to quaternary structure, the complex is composed of two ATP-binding proteins (SsuB), two transmembrane proteins (SsuC) and a solute-binding protein (SsuA).

It is found in the cell inner membrane. The enzyme catalyses ATP + H2O + aliphatic sulfonate-[sulfonate-binding protein]Side 1 = ADP + phosphate + aliphatic sulfonateSide 2 + [sulfonate-binding protein]Side 1.. Its function is as follows. Part of the ABC transporter complex SsuABC involved in aliphatic sulfonates import. Responsible for energy coupling to the transport system. This is Aliphatic sulfonates import ATP-binding protein SsuB 2 from Xanthomonas axonopodis pv. citri (strain 306).